The following is a 32-amino-acid chain: Photosystem II reaction center protein T (32 aa).

The chain crosses the membrane as a helical span at residues 3 to 23 (ALVYTFLLVATLGIIFFAIFF).

This sequence belongs to the PsbT family. As to quaternary structure, PSII is composed of 1 copy each of membrane proteins PsbA, PsbB, PsbC, PsbD, PsbE, PsbF, PsbH, PsbI, PsbJ, PsbK, PsbL, PsbM, PsbT, PsbY, PsbZ, Psb30/Ycf12, at least 3 peripheral proteins of the oxygen-evolving complex and a large number of cofactors. It forms dimeric complexes.

It is found in the plastid. The protein resides in the chloroplast thylakoid membrane. Found at the monomer-monomer interface of the photosystem II (PS II) dimer, plays a role in assembly and dimerization of PSII. PSII is a light-driven water plastoquinone oxidoreductase, using light energy to abstract electrons from H(2)O, generating a proton gradient subsequently used for ATP formation. The chain is Photosystem II reaction center protein T from Psilotum nudum (Whisk fern).